An 85-amino-acid chain; its full sequence is Coiled-coil-helix-coiled-coil-helix domain-containing protein 7 (85 aa).

A CHCH domain is found at 13–55 (SNPCLEETDASTKCMDDNRYEKDLCTPYFVKYKNCRKFWNGIM). Short sequence motifs (cx9C motif) lie at residues 16–26 (CLEETDASTKC) and 37–47 (CTPYFVKYKNC). 2 disulfides stabilise this stretch: C16–C47 and C26–C37.

It belongs to the CHCHD7 family.

It localises to the mitochondrion intermembrane space. In Xenopus tropicalis (Western clawed frog), this protein is Coiled-coil-helix-coiled-coil-helix domain-containing protein 7 (chchd7).